The sequence spans 222 residues: Probable transaldolase 2 (222 aa).

Lys90 acts as the Schiff-base intermediate with substrate in catalysis.

It belongs to the transaldolase family. Type 3B subfamily.

It is found in the cytoplasm. It carries out the reaction D-sedoheptulose 7-phosphate + D-glyceraldehyde 3-phosphate = D-erythrose 4-phosphate + beta-D-fructose 6-phosphate. The protein operates within carbohydrate degradation; pentose phosphate pathway; D-glyceraldehyde 3-phosphate and beta-D-fructose 6-phosphate from D-ribose 5-phosphate and D-xylulose 5-phosphate (non-oxidative stage): step 2/3. Its function is as follows. Transaldolase is important for the balance of metabolites in the pentose-phosphate pathway. This chain is Probable transaldolase 2, found in Bacillus anthracis.